We begin with the raw amino-acid sequence, 269 residues long: Putative pyridoxine kinase (269 aa).

Asn139 lines the ATP pocket. Glu142 lines the Mg(2+) pocket. ATP contacts are provided by residues 176–180 (KGGGR), Asp189, Val205, Gly214, and Lys239.

The protein belongs to the ThiD family.

It carries out the reaction pyridoxal + ATP = pyridoxal 5'-phosphate + ADP + H(+). Functionally, phosphorylates B6 vitamers; functions in a salvage pathway. Uses pyridoxal, pyridoxine, and pyridoxamine as substrates. The sequence is that of Putative pyridoxine kinase (pdxK) from Treponema pallidum (strain Nichols).